A 328-amino-acid chain; its full sequence is Glycerol-3-phosphate dehydrogenase [NAD(P)+] (328 aa).

NADPH-binding residues include Trp11, Arg30, and Lys103. Sn-glycerol 3-phosphate-binding residues include Lys103, Gly132, and Ser134. Ala136 lines the NADPH pocket. Sn-glycerol 3-phosphate contacts are provided by Lys187, Asp240, Ser250, Arg251, and Asn252. The Proton acceptor role is filled by Lys187. Arg251 contributes to the NADPH binding site. NADPH-binding residues include Val275 and Glu277.

The protein belongs to the NAD-dependent glycerol-3-phosphate dehydrogenase family.

Its subcellular location is the cytoplasm. It carries out the reaction sn-glycerol 3-phosphate + NAD(+) = dihydroxyacetone phosphate + NADH + H(+). It catalyses the reaction sn-glycerol 3-phosphate + NADP(+) = dihydroxyacetone phosphate + NADPH + H(+). The protein operates within membrane lipid metabolism; glycerophospholipid metabolism. In terms of biological role, catalyzes the reduction of the glycolytic intermediate dihydroxyacetone phosphate (DHAP) to sn-glycerol 3-phosphate (G3P), the key precursor for phospholipid synthesis. This chain is Glycerol-3-phosphate dehydrogenase [NAD(P)+], found in Thiobacillus denitrificans (strain ATCC 25259 / T1).